A 451-amino-acid chain; its full sequence is MGLDIVLFRADKGGNPDLIRQSQKVRYANVDAVQEVIDLDKVVKETKYRLDNTNAEYAKLNKSVAMKKKAGESADEIIAQAEELNQSIIKLKAEVSEVELLLRKKLRPIGNIVHESVPIDNNEDNNQIIKTWGECKTSEGLLHHHELLEMIDGYDPERGTLVSGHRCYFLKGIGVLLNQAIINFALMHMTKRGSVPLQTPFFMNKDVMAKTAQLEQFDDELYKVTGDNEEKYLIATSEQPISAFHQDEWIEEKDLPKKYVGYSTCFRKEAGSHGRDTWGIFRVHQFEKIEQFCITEPEKSWDMMEEMINNSEQFYQELGIPYRVVNIVSGALNNAASKKYDLEGWFPGYNQYRELVSCSNCTDYQSRDLEIRCGMKKQGQQQKKYVHMLNSTLAATTRVICCILENYQTEGGITVPVPLRPYLGKDFIPFVKAAPKQKAIPKQKTTTPEQK.

Residue 236–238 participates in L-serine binding; that stretch reads TSE. ATP is bound by residues 267 to 269 and V283; that span reads RKE. E290 is a binding site for L-serine. ATP is bound at residue 354–357; it reads ELVS. T392 contributes to the L-serine binding site.

This sequence belongs to the class-II aminoacyl-tRNA synthetase family. Type-1 seryl-tRNA synthetase subfamily. In terms of assembly, homodimer. The tRNA molecule binds across the dimer.

Its subcellular location is the cytoplasm. The catalysed reaction is tRNA(Ser) + L-serine + ATP = L-seryl-tRNA(Ser) + AMP + diphosphate + H(+). The enzyme catalyses tRNA(Sec) + L-serine + ATP = L-seryl-tRNA(Sec) + AMP + diphosphate + H(+). It functions in the pathway aminoacyl-tRNA biosynthesis; selenocysteinyl-tRNA(Sec) biosynthesis; L-seryl-tRNA(Sec) from L-serine and tRNA(Sec): step 1/1. In terms of biological role, catalyzes the attachment of serine to tRNA(Ser). Is also able to aminoacylate tRNA(Sec) with serine, to form the misacylated tRNA L-seryl-tRNA(Sec), which will be further converted into selenocysteinyl-tRNA(Sec). This chain is Serine--tRNA ligase, cytoplasmic (serS), found in Dictyostelium discoideum (Social amoeba).